Here is a 681-residue protein sequence, read N- to C-terminus: Structure-specific endonuclease subunit SLX4 (681 aa).

Disordered stretches follow at residues 239 to 305 (EREK…QEQL) and 505 to 528 (EVTG…NENL). A compositionally biased stretch (polar residues) spans 251 to 261 (SDSSPEPTQLL). Residues 265–281 (IIEEEHEVDEEEEDNEN) show a composition bias toward acidic residues. Polar residues-rich tracts occupy residues 288–305 (QLAS…QEQL) and 518–528 (QVPSSPGNENL).

It belongs to the SLX4 family. As to quaternary structure, forms a heterodimer with SLX1. Phosphorylated in response to DNA damage.

The protein localises to the nucleus. Its function is as follows. Regulatory subunit of the SLX1-SLX4 structure-specific endonuclease that resolves DNA secondary structures generated during DNA repair and recombination. Has endonuclease activity towards branched DNA substrates, introducing single-strand cuts in duplex DNA close to junctions with ss-DNA. In Meyerozyma guilliermondii (strain ATCC 6260 / CBS 566 / DSM 6381 / JCM 1539 / NBRC 10279 / NRRL Y-324) (Yeast), this protein is Structure-specific endonuclease subunit SLX4.